We begin with the raw amino-acid sequence, 367 residues long: Queuine tRNA-ribosyltransferase (367 aa).

D89 (proton acceptor) is an active-site residue. Substrate is bound by residues 89–93 (DSGGF), D143, Q185, and G212. Positions 243 to 249 (GVGTPSD) are RNA binding. D262 serves as the catalytic Nucleophile. Residues 267 to 271 (TRNAR) are RNA binding; important for wobble base 34 recognition. Residues C300, C302, C305, and H331 each contribute to the Zn(2+) site.

It belongs to the queuine tRNA-ribosyltransferase family. In terms of assembly, homodimer. Within each dimer, one monomer is responsible for RNA recognition and catalysis, while the other monomer binds to the replacement base PreQ1. Requires Zn(2+) as cofactor.

It carries out the reaction 7-aminomethyl-7-carbaguanine + guanosine(34) in tRNA = 7-aminomethyl-7-carbaguanosine(34) in tRNA + guanine. It functions in the pathway tRNA modification; tRNA-queuosine biosynthesis. Catalyzes the base-exchange of a guanine (G) residue with the queuine precursor 7-aminomethyl-7-deazaguanine (PreQ1) at position 34 (anticodon wobble position) in tRNAs with GU(N) anticodons (tRNA-Asp, -Asn, -His and -Tyr). Catalysis occurs through a double-displacement mechanism. The nucleophile active site attacks the C1' of nucleotide 34 to detach the guanine base from the RNA, forming a covalent enzyme-RNA intermediate. The proton acceptor active site deprotonates the incoming PreQ1, allowing a nucleophilic attack on the C1' of the ribose to form the product. After dissociation, two additional enzymatic reactions on the tRNA convert PreQ1 to queuine (Q), resulting in the hypermodified nucleoside queuosine (7-(((4,5-cis-dihydroxy-2-cyclopenten-1-yl)amino)methyl)-7-deazaguanosine). The sequence is that of Queuine tRNA-ribosyltransferase from Thiobacillus denitrificans (strain ATCC 25259 / T1).